Here is a 219-residue protein sequence, read N- to C-terminus: Cytidylate kinase (219 aa).

21–29 (GPAASGKGT) contacts ATP.

This sequence belongs to the cytidylate kinase family. Type 1 subfamily.

It is found in the cytoplasm. It catalyses the reaction CMP + ATP = CDP + ADP. It carries out the reaction dCMP + ATP = dCDP + ADP. This Rickettsia conorii (strain ATCC VR-613 / Malish 7) protein is Cytidylate kinase.